A 117-amino-acid polypeptide reads, in one-letter code: Large ribosomal subunit protein bL19 (117 aa).

Belongs to the bacterial ribosomal protein bL19 family.

This protein is located at the 30S-50S ribosomal subunit interface and may play a role in the structure and function of the aminoacyl-tRNA binding site. This Sorangium cellulosum (strain So ce56) (Polyangium cellulosum (strain So ce56)) protein is Large ribosomal subunit protein bL19.